Reading from the N-terminus, the 100-residue chain is Integration host factor subunit beta (100 aa).

It belongs to the bacterial histone-like protein family. Heterodimer of an alpha and a beta chain.

In terms of biological role, this protein is one of the two subunits of integration host factor, a specific DNA-binding protein that functions in genetic recombination as well as in transcriptional and translational control. The polypeptide is Integration host factor subunit beta (Rhodospirillum rubrum (strain ATCC 11170 / ATH 1.1.1 / DSM 467 / LMG 4362 / NCIMB 8255 / S1)).